Reading from the N-terminus, the 459-residue chain is NADH oxidase (459 aa).

An FAD-binding site is contributed by Asn10. The Proton acceptor role is filled by His11. FAD is bound by residues Ala12, Asp34, Gln35, Cys44, Val81, Ala110, Ser113, Lys143, and Tyr172. Cys44 serves as the catalytic Redox-active. At Cys44 the chain carries Cysteine sulfinic acid (-SO2H). NAD(+) contacts are provided by Ile173, Asp192, Tyr201, and Gly256. Position 294 (Asp294) interacts with FAD. Ala310 lines the NAD(+) pocket. Positions 311, 312, and 313 each coordinate FAD. NAD(+) is bound at residue Gly341. Phe439 serves as a coordination point for FAD.

It belongs to the class-III pyridine nucleotide-disulfide oxidoreductase family. FAD serves as cofactor.

It is found in the secreted. Its subcellular location is the cell wall. It carries out the reaction 2 NADH + O2 + 2 H(+) = 2 NAD(+) + 2 H2O. Functionally, catalyzes the four-electron reduction of molecular oxygen to water. Plays a role in redox balance maintenance. May be involved in mediating bacterial adhesion to host cells. May be considered a potential virulence factor. The polypeptide is NADH oxidase (Streptococcus pneumoniae (strain ATCC BAA-255 / R6)).